Reading from the N-terminus, the 629-residue chain is 1-deoxy-D-xylulose-5-phosphate synthase (629 aa).

Thiamine diphosphate contacts are provided by residues His78 and 119–121; that span reads AHS. A Mg(2+)-binding site is contributed by Asp150. Thiamine diphosphate-binding positions include 151 to 152, Asn179, Tyr286, and Glu368; that span reads GA. Asn179 lines the Mg(2+) pocket.

The protein belongs to the transketolase family. DXPS subfamily. In terms of assembly, homodimer. It depends on Mg(2+) as a cofactor. Requires thiamine diphosphate as cofactor.

The enzyme catalyses D-glyceraldehyde 3-phosphate + pyruvate + H(+) = 1-deoxy-D-xylulose 5-phosphate + CO2. Its pathway is metabolic intermediate biosynthesis; 1-deoxy-D-xylulose 5-phosphate biosynthesis; 1-deoxy-D-xylulose 5-phosphate from D-glyceraldehyde 3-phosphate and pyruvate: step 1/1. Functionally, catalyzes the acyloin condensation reaction between C atoms 2 and 3 of pyruvate and glyceraldehyde 3-phosphate to yield 1-deoxy-D-xylulose-5-phosphate (DXP). The chain is 1-deoxy-D-xylulose-5-phosphate synthase from Acidovorax sp. (strain JS42).